The primary structure comprises 706 residues: Fatty acid oxidation complex subunit alpha (706 aa).

The tract at residues 1–188 is enoyl-CoA hydratase; it reads MEKTFNLTRR…KMGLVNDVVP (188 aa). The interval 308–706 is 3-hydroxyacyl-CoA dehydrogenase; the sequence is RKVKKAVILG…TMAQENAHFF (399 aa).

It in the N-terminal section; belongs to the enoyl-CoA hydratase/isomerase family. In the central section; belongs to the 3-hydroxyacyl-CoA dehydrogenase family. Heterotetramer of two alpha chains (FadJ) and two beta chains (FadI).

It is found in the cytoplasm. It carries out the reaction a (3S)-3-hydroxyacyl-CoA = a (2E)-enoyl-CoA + H2O. The catalysed reaction is a 4-saturated-(3S)-3-hydroxyacyl-CoA = a (3E)-enoyl-CoA + H2O. It catalyses the reaction a (3S)-3-hydroxyacyl-CoA + NAD(+) = a 3-oxoacyl-CoA + NADH + H(+). The enzyme catalyses (3S)-3-hydroxybutanoyl-CoA = (3R)-3-hydroxybutanoyl-CoA. Its pathway is lipid metabolism; fatty acid beta-oxidation. Catalyzes the formation of a hydroxyacyl-CoA by addition of water on enoyl-CoA. Also exhibits 3-hydroxyacyl-CoA epimerase and 3-hydroxyacyl-CoA dehydrogenase activities. The chain is Fatty acid oxidation complex subunit alpha from Shewanella baltica (strain OS155 / ATCC BAA-1091).